A 404-amino-acid polypeptide reads, in one-letter code: S-adenosylmethionine synthase (404 aa).

The span at 1 to 13 shows a compositional bias: polar residues; that stretch reads MSQSRYFFTSESV. Residues 1 to 20 form a disordered region; it reads MSQSRYFFTSESVSEGHPDK. His-17 provides a ligand contact to ATP. Asp-19 provides a ligand contact to Mg(2+). Glu-45 contributes to the K(+) binding site. Positions 58 and 101 each coordinate L-methionine. A flexible loop region spans residues 101–111; sequence QSPDINRGVDR. ATP-binding positions include 172–174, 245–246, Asp-254, 260–261, Ala-277, and Lys-281; these read DAK, RF, and RK. Asp-254 contributes to the L-methionine binding site. Position 285 (Lys-285) interacts with L-methionine.

This sequence belongs to the AdoMet synthase family. As to quaternary structure, homotetramer; dimer of dimers. Mg(2+) serves as cofactor. Requires K(+) as cofactor.

It is found in the cytoplasm. It carries out the reaction L-methionine + ATP + H2O = S-adenosyl-L-methionine + phosphate + diphosphate. It functions in the pathway amino-acid biosynthesis; S-adenosyl-L-methionine biosynthesis; S-adenosyl-L-methionine from L-methionine: step 1/1. Functionally, catalyzes the formation of S-adenosylmethionine (AdoMet) from methionine and ATP. The overall synthetic reaction is composed of two sequential steps, AdoMet formation and the subsequent tripolyphosphate hydrolysis which occurs prior to release of AdoMet from the enzyme. This is S-adenosylmethionine synthase from Chlorobium limicola (strain DSM 245 / NBRC 103803 / 6330).